The following is a 595-amino-acid chain: Actin-histidine N-methyltransferase (595 aa).

The segment at 1–22 (MGKKSRVKTQKSGTGATATVSP) is disordered. The segment covering 10–20 (QKSGTGATATV) has biased composition (polar residues). S-adenosyl-L-methionine contacts are provided by residues R75, 104–106 (EGF), R254, 275–279 (DMCNH), and 325–327 (SGF). The region spanning 94-314 (EGFEMVNFKE…AGEQIYIFYG (221 aa)) is the SET domain. The residue at position 513 (S513) is a Phosphoserine. Polar residues predominate over residues 549-563 (ENGLVNGENSIPNGT). Residues 549-595 (ENGLVNGENSIPNGTRSEDENLNQEESKRAVEDAKGSSSDRADAVKE) form a disordered region. The span at 573–595 (EESKRAVEDAKGSSSDRADAVKE) shows a compositional bias: basic and acidic residues.

Belongs to the class V-like SAM-binding methyltransferase superfamily. SETD3 actin-histidine methyltransferase family. Interacts with MYOD1. In terms of processing, phosphorylated by GSK3B, which is required for recognition by the SCF(FBXW7) complex and subsequent degradation. Post-translationally, ubiquitinated by the SCF(FBXW7) complex following phosphorylation by GSK3B, leading to its degradation by the proteasome.

Its subcellular location is the cytoplasm. It is found in the nucleus. The catalysed reaction is L-histidyl-[protein] + S-adenosyl-L-methionine = N(tele)-methyl-L-histidyl-[protein] + S-adenosyl-L-homocysteine + H(+). Its function is as follows. Protein-histidine N-methyltransferase that specifically mediates 3-methylhistidine (tele-methylhistidine) methylation of actin at 'His-73'. Histidine methylation of actin is required for smooth muscle contraction of the laboring uterus during delivery. Does not have protein-lysine N-methyltransferase activity and probably only catalyzes histidine methylation of actin. This chain is Actin-histidine N-methyltransferase, found in Callithrix jacchus (White-tufted-ear marmoset).